The chain runs to 491 residues: Ketol-acid reductoisomerase (NADP(+)) (491 aa).

Residues 17 to 208 (LGKCRFMSRD…GGHRAGVLES (192 aa)) form the KARI N-terminal Rossmann domain. NADP(+) contacts are provided by residues 45–48 (CGAQ), arginine 68, arginine 76, serine 78, and 108–110 (DKQ). Histidine 132 is an active-site residue. Residue glycine 158 participates in NADP(+) binding. KARI C-terminal knotted domains follow at residues 209-344 (SFVA…NYPE) and 345-484 (YEGK…MTDM). Mg(2+) contacts are provided by aspartate 217, glutamate 221, glutamate 389, and glutamate 393. Serine 414 is a substrate binding site.

It belongs to the ketol-acid reductoisomerase family. Mg(2+) is required as a cofactor.

The enzyme catalyses (2R)-2,3-dihydroxy-3-methylbutanoate + NADP(+) = (2S)-2-acetolactate + NADPH + H(+). The catalysed reaction is (2R,3R)-2,3-dihydroxy-3-methylpentanoate + NADP(+) = (S)-2-ethyl-2-hydroxy-3-oxobutanoate + NADPH + H(+). It participates in amino-acid biosynthesis; L-isoleucine biosynthesis; L-isoleucine from 2-oxobutanoate: step 2/4. The protein operates within amino-acid biosynthesis; L-valine biosynthesis; L-valine from pyruvate: step 2/4. In terms of biological role, involved in the biosynthesis of branched-chain amino acids (BCAA). Catalyzes an alkyl-migration followed by a ketol-acid reduction of (S)-2-acetolactate (S2AL) to yield (R)-2,3-dihydroxy-isovalerate. In the isomerase reaction, S2AL is rearranged via a Mg-dependent methyl migration to produce 3-hydroxy-3-methyl-2-ketobutyrate (HMKB). In the reductase reaction, this 2-ketoacid undergoes a metal-dependent reduction by NADPH to yield (R)-2,3-dihydroxy-isovalerate. The polypeptide is Ketol-acid reductoisomerase (NADP(+)) (Proteus mirabilis (strain HI4320)).